The primary structure comprises 303 residues: Glutamyl-Q tRNA(Asp) synthetase (303 aa).

L-glutamate contacts are provided by residues 16 to 20 (RFAPS) and Glu52. The short motif at 19–29 (PSPSGPLHFGS) is the 'HIGH' region element. Zn(2+)-binding residues include Cys108, Cys110, Tyr122, and Cys126. L-glutamate is bound by residues Tyr177 and Arg195. The 'KMSKS' region signature appears at 233 to 237 (KLSKQ). Lys236 contacts ATP.

The protein belongs to the class-I aminoacyl-tRNA synthetase family. GluQ subfamily. Zn(2+) serves as cofactor.

Catalyzes the tRNA-independent activation of glutamate in presence of ATP and the subsequent transfer of glutamate onto a tRNA(Asp). Glutamate is transferred on the 2-amino-5-(4,5-dihydroxy-2-cyclopenten-1-yl) moiety of the queuosine in the wobble position of the QUC anticodon. The protein is Glutamyl-Q tRNA(Asp) synthetase of Vibrio vulnificus (strain CMCP6).